We begin with the raw amino-acid sequence, 241 residues long: Probable 2-phosphosulfolactate phosphatase (241 aa).

It belongs to the ComB family. The cofactor is Mg(2+).

It catalyses the reaction (2R)-O-phospho-3-sulfolactate + H2O = (2R)-3-sulfolactate + phosphate. This chain is Probable 2-phosphosulfolactate phosphatase, found in Gloeothece citriformis (strain PCC 7424) (Cyanothece sp. (strain PCC 7424)).